We begin with the raw amino-acid sequence, 420 residues long: Glucose-1-phosphate adenylyltransferase (420 aa).

Alpha-D-glucose 1-phosphate contacts are provided by residues tyrosine 107, glycine 173, glutamate 188 to lysine 189, and serine 206.

It belongs to the bacterial/plant glucose-1-phosphate adenylyltransferase family. Homotetramer.

The catalysed reaction is alpha-D-glucose 1-phosphate + ATP + H(+) = ADP-alpha-D-glucose + diphosphate. The protein operates within glycan biosynthesis; glycogen biosynthesis. Involved in the biosynthesis of ADP-glucose, a building block required for the elongation reactions to produce glycogen. Catalyzes the reaction between ATP and alpha-D-glucose 1-phosphate (G1P) to produce pyrophosphate and ADP-Glc. This is Glucose-1-phosphate adenylyltransferase from Shewanella sp. (strain W3-18-1).